Reading from the N-terminus, the 382-residue chain is S-adenosylmethionine synthase (382 aa).

His16 provides a ligand contact to ATP. Residue Asp18 participates in Mg(2+) binding. Glu44 contributes to the K(+) binding site. The L-methionine site is built by Glu57 and Gln100. Residues 100–110 (QSPDIAQGVDN) form a flexible loop region. ATP-binding positions include 165 to 167 (DAK), 231 to 232 (RF), Asp240, 246 to 247 (RK), and Lys267. L-methionine is bound at residue Asp240. Lys271 is an L-methionine binding site.

The protein belongs to the AdoMet synthase family. As to quaternary structure, homotetramer; dimer of dimers. Requires Mg(2+) as cofactor. It depends on K(+) as a cofactor.

The protein localises to the cytoplasm. The enzyme catalyses L-methionine + ATP + H2O = S-adenosyl-L-methionine + phosphate + diphosphate. The protein operates within amino-acid biosynthesis; S-adenosyl-L-methionine biosynthesis; S-adenosyl-L-methionine from L-methionine: step 1/1. In terms of biological role, catalyzes the formation of S-adenosylmethionine (AdoMet) from methionine and ATP. The overall synthetic reaction is composed of two sequential steps, AdoMet formation and the subsequent tripolyphosphate hydrolysis which occurs prior to release of AdoMet from the enzyme. The sequence is that of S-adenosylmethionine synthase from Legionella pneumophila (strain Lens).